The sequence spans 709 residues: MNPIVKQFKYGQHTVTLETGAIARQATAAVMASMDDTTVFVTVVAKKDVKEGQDFFPLTVNYQERTYAAGKIPGGFFKREGRPSEGETLIARLIDRPIRPLFPEGFFNEIQVVATVVSVNPQISPDLVAMIGASAALTLSGVPFNGPIGAARVGFIDNQFVLNPTMAEQKQSRLDLVVAGTDKAVLMVESEADVLTEEQMLASVVFGHQQQQVVIEAIKEFAKEAGKPRWDWVAPQPNTDLINKVKAIAEARLGDAYRITEKQLRYEQIDAIKADVIAQITAEDEEISEGKIVDIFTALESQIVRGRIIAGEPRIDGRTVDTVRALDICTGVLPRTHGSAIFTRGETQALAVATLGTERDAQIIDELTGERQDHFLFHYNFPPYSVGETGMIGSPKRREIGHGRLAKRGVAAVMPSLAEFPYVVRVVSEITESNGSSSMASVCGASLALMDAGVPIKAAVAGIAMGLVKEEEKFVVLSDILGDEDHLGDMDFKVAGTREGVTALQMDIKIEGITPEIMQIALNQAKSARMHILGVMEQAIPAPRADISDYAPRIYTMKIDPKKIKDVIGKGGATIRSLTEETGTSIDIDDDGTVKIAAVDSNAAKNVMGRIEEIVAEVEAGAIYKGKVTRLADFGAFVAIVGNKEGLVHISQIAEERVEKVSDYLQVGQEVNVKVVEIDRQGRIRLTMKDLAPKQETEINQEDPVEEQE.

The Mg(2+) site is built by Asp-485 and Asp-491. The 60-residue stretch at 552-611 (PRIYTMKIDPKKIKDVIGKGGATIRSLTEETGTSIDIDDDGTVKIAAVDSNAAKNVMGRI) folds into the KH domain. The S1 motif domain occupies 621–689 (GAIYKGKVTR…RQGRIRLTMK (69 aa)).

It belongs to the polyribonucleotide nucleotidyltransferase family. Component of the RNA degradosome, which is a multiprotein complex involved in RNA processing and mRNA degradation. Mg(2+) serves as cofactor.

The protein localises to the cytoplasm. The catalysed reaction is RNA(n+1) + phosphate = RNA(n) + a ribonucleoside 5'-diphosphate. Involved in mRNA degradation. Catalyzes the phosphorolysis of single-stranded polyribonucleotides processively in the 3'- to 5'-direction. The polypeptide is Polyribonucleotide nucleotidyltransferase (Haemophilus influenzae (strain PittEE)).